The sequence spans 291 residues: Phosphatidylglycerol--prolipoprotein diacylglyceryl transferase (291 aa).

Helical transmembrane passes span 21-41, 60-80, 96-116, 130-150, 198-218, 225-245, and 260-280; these read VSLHWYGLMYLVGFVFAMWLA, LLYAGFLGVFLGGRIGYVLFY, WDGGMSFHGGLIGVICVMIWF, FIAPLIPFGLGAGRLGNFING, SQLYELFLEGIVLFIILNLFI, GAVSGLFLIGYGAFRIIVEFF, and ISMGQILSIPMIVAGAAMMIW. R143 is a binding site for a 1,2-diacyl-sn-glycero-3-phospho-(1'-sn-glycerol).

The protein belongs to the Lgt family.

It localises to the cell inner membrane. It carries out the reaction L-cysteinyl-[prolipoprotein] + a 1,2-diacyl-sn-glycero-3-phospho-(1'-sn-glycerol) = an S-1,2-diacyl-sn-glyceryl-L-cysteinyl-[prolipoprotein] + sn-glycerol 1-phosphate + H(+). It functions in the pathway protein modification; lipoprotein biosynthesis (diacylglyceryl transfer). Its function is as follows. Catalyzes the transfer of the diacylglyceryl group from phosphatidylglycerol to the sulfhydryl group of the N-terminal cysteine of a prolipoprotein, the first step in the formation of mature lipoproteins. In Cronobacter sakazakii (strain ATCC BAA-894) (Enterobacter sakazakii), this protein is Phosphatidylglycerol--prolipoprotein diacylglyceryl transferase.